Reading from the N-terminus, the 102-residue chain is Large ribosomal subunit protein bL21 (102 aa).

It belongs to the bacterial ribosomal protein bL21 family. In terms of assembly, part of the 50S ribosomal subunit. Contacts protein L20.

This protein binds to 23S rRNA in the presence of protein L20. This Finegoldia magna (strain ATCC 29328 / DSM 20472 / WAL 2508) (Peptostreptococcus magnus) protein is Large ribosomal subunit protein bL21.